Here is a 213-residue protein sequence, read N- to C-terminus: ATP-dependent dethiobiotin synthetase BioD (213 aa).

12-17 provides a ligand contact to ATP; it reads NVGKTF. Threonine 16 lines the Mg(2+) pocket. Lysine 36 is a catalytic residue. Serine 40 provides a ligand contact to substrate. ATP contacts are provided by residues aspartate 53, 110–113, and 170–171; these read EGTG and NQ. Mg(2+) contacts are provided by aspartate 53 and glutamate 110.

The protein belongs to the dethiobiotin synthetase family. As to quaternary structure, homodimer. Mg(2+) serves as cofactor.

It localises to the cytoplasm. The enzyme catalyses (7R,8S)-7,8-diammoniononanoate + CO2 + ATP = (4R,5S)-dethiobiotin + ADP + phosphate + 3 H(+). It functions in the pathway cofactor biosynthesis; biotin biosynthesis; biotin from 7,8-diaminononanoate: step 1/2. Functionally, catalyzes a mechanistically unusual reaction, the ATP-dependent insertion of CO2 between the N7 and N8 nitrogen atoms of 7,8-diaminopelargonic acid (DAPA, also called 7,8-diammoniononanoate) to form a ureido ring. The sequence is that of ATP-dependent dethiobiotin synthetase BioD from Ruthia magnifica subsp. Calyptogena magnifica.